The primary structure comprises 224 residues: Ras-related protein Rab-32C (224 aa).

The interval 1-22 (MYSNKNDKDKDKDQNNENNKNN) is disordered. 35–42 (GKLACGKT) contributes to the GTP binding site. The Effector region signature appears at 57–65 (YKPTIGVDF). Residues 83 to 87 (DIAGQ) and 142 to 145 (NKCD) each bind GTP. A disordered region spans residues 203-224 (GFKLSDQSQSTETTPTQSKTCC). Residues 209 to 224 (QSQSTETTPTQSKTCC) show a composition bias toward low complexity. Residues cysteine 223 and cysteine 224 are each lipidated (S-geranylgeranyl cysteine).

It belongs to the small GTPase superfamily. Rab family.

The sequence is that of Ras-related protein Rab-32C (rab32C) from Dictyostelium discoideum (Social amoeba).